Reading from the N-terminus, the 572-residue chain is Proline--tRNA ligase (572 aa).

It belongs to the class-II aminoacyl-tRNA synthetase family. ProS type 1 subfamily. In terms of assembly, homodimer.

It is found in the cytoplasm. It catalyses the reaction tRNA(Pro) + L-proline + ATP = L-prolyl-tRNA(Pro) + AMP + diphosphate. Functionally, catalyzes the attachment of proline to tRNA(Pro) in a two-step reaction: proline is first activated by ATP to form Pro-AMP and then transferred to the acceptor end of tRNA(Pro). As ProRS can inadvertently accommodate and process non-cognate amino acids such as alanine and cysteine, to avoid such errors it has two additional distinct editing activities against alanine. One activity is designated as 'pretransfer' editing and involves the tRNA(Pro)-independent hydrolysis of activated Ala-AMP. The other activity is designated 'posttransfer' editing and involves deacylation of mischarged Ala-tRNA(Pro). The misacylated Cys-tRNA(Pro) is not edited by ProRS. The polypeptide is Proline--tRNA ligase (Yersinia pseudotuberculosis serotype O:1b (strain IP 31758)).